A 380-amino-acid chain; its full sequence is MSSSVAVCNSPVFSPSSSLFCNKPLNTSPAHETLTLSLSHLNPPVSSTSPSAASPTSPFCLRLLKPPAKLGFGSDSGPGSILKRKRPTTLDIPVAPVGIAAPISNADTPREESRAVEREGDGYSVYCKRGKREAMEDRFSAITNLQGDPKQAIFGVYDGHGGPTAAEFAAKNLCSNILGEIVGGRNESKIEEAVKRGYLATDSEFLKEKNVKGGSCCVTALISDGNLVVANAGDCRAVLSVGGFAEALTSDHRPSRDDERNRIESSGGYVDTFNSVWRIQGSLAVSRGIGDAHLKQWIISEPEINILRINPQHEFLILASDGLWDKVSNQEAVDIARPFCKGTDQKRKPLLACKKLVDLSVSRGSLDDISVMLIQLCHLF.

Residues 122-376 enclose the PPM-type phosphatase domain; it reads GYSVYCKRGK…DDISVMLIQL (255 aa). Positions 158, 159, 321, and 367 each coordinate Mn(2+).

The protein belongs to the PP2C family. Mg(2+) is required as a cofactor. It depends on Mn(2+) as a cofactor.

It catalyses the reaction O-phospho-L-seryl-[protein] + H2O = L-seryl-[protein] + phosphate. It carries out the reaction O-phospho-L-threonyl-[protein] + H2O = L-threonyl-[protein] + phosphate. The polypeptide is Probable protein phosphatase 2C 2 (Arabidopsis thaliana (Mouse-ear cress)).